Reading from the N-terminus, the 330-residue chain is Beta-ketoacyl-[acyl-carrier-protein] synthase III (330 aa).

Residues C115 and H255 contribute to the active site. The ACP-binding stretch occupies residues 256 to 260; it reads QANVR. The active site involves N285.

The protein belongs to the thiolase-like superfamily. FabH family. Homodimer.

It localises to the cytoplasm. The catalysed reaction is malonyl-[ACP] + acetyl-CoA + H(+) = 3-oxobutanoyl-[ACP] + CO2 + CoA. It participates in lipid metabolism; fatty acid biosynthesis. In terms of biological role, catalyzes the condensation reaction of fatty acid synthesis by the addition to an acyl acceptor of two carbons from malonyl-ACP. Catalyzes the first condensation reaction which initiates fatty acid synthesis and may therefore play a role in governing the total rate of fatty acid production. Possesses both acetoacetyl-ACP synthase and acetyl transacylase activities. Its substrate specificity determines the biosynthesis of branched-chain and/or straight-chain of fatty acids. The chain is Beta-ketoacyl-[acyl-carrier-protein] synthase III from Symbiobacterium thermophilum (strain DSM 24528 / JCM 14929 / IAM 14863 / T).